The primary structure comprises 198 residues: dITP/XTP pyrophosphatase (198 aa).

11 to 16 (THNPGK) is a binding site for substrate. Residues glutamate 44 and aspartate 73 each contribute to the Mg(2+) site. Aspartate 73 functions as the Proton acceptor in the catalytic mechanism. Substrate contacts are provided by residues serine 74, 156–159 (FGYD), lysine 179, and 184–185 (HR).

Belongs to the HAM1 NTPase family. In terms of assembly, homodimer. Requires Mg(2+) as cofactor.

It catalyses the reaction XTP + H2O = XMP + diphosphate + H(+). The enzyme catalyses dITP + H2O = dIMP + diphosphate + H(+). It carries out the reaction ITP + H2O = IMP + diphosphate + H(+). Pyrophosphatase that catalyzes the hydrolysis of nucleoside triphosphates to their monophosphate derivatives, with a high preference for the non-canonical purine nucleotides XTP (xanthosine triphosphate), dITP (deoxyinosine triphosphate) and ITP. Seems to function as a house-cleaning enzyme that removes non-canonical purine nucleotides from the nucleotide pool, thus preventing their incorporation into DNA/RNA and avoiding chromosomal lesions. The protein is dITP/XTP pyrophosphatase (ysnA) of Bacillus subtilis (strain 168).